The sequence spans 238 residues: Bacterial microcompartment shell protein PduB (238 aa).

2 consecutive BMC circularly permuted domains span residues 14–125 (FVGA…VYNA) and 126–225 (KAGH…LSQF). The cysteines at positions 158 and 197 are disulfide-linked.

Belongs to the EutL/PduB family. As to quaternary structure, homotrimerizes to form a pseudohexamer with a central pore 7.5 Angstroms wide and 22 Angstroms long; the pore channel in the crystal binds up to 4 glycerol molecules. A disulfide bond forms in the pore, it is not clear if this is an artifact. The trimers pack into an array.

The protein resides in the bacterial microcompartment. It participates in polyol metabolism; 1,2-propanediol degradation. In terms of biological role, one of the major shell proteins of the bacterial microcompartment (BMC) dedicated to 1,2-propanediol (1,2-PD) degradation. Probably involved in a propanediol fermentation/reuterin formation pathway. This Limosilactobacillus reuteri (strain DSM 20016) (Lactobacillus reuteri) protein is Bacterial microcompartment shell protein PduB.